Here is a 287-residue protein sequence, read N- to C-terminus: MWALTADADFLAQRGQGQVEQVFARAVNIALPARQQLLTLLCEEYDNAPNSCRLALTHFDDLFRHGDKVQFDDQGITVGQHLHIEMSRCRRWLSPTLQMTAVNFHLIAWLQWHDIIHQHLGENETLFNYRGDNPFYQALNKELHIKRRAVIQAVNDKQNIASAVASMMGLGIGLTPSADDYLTGLALILFIPGHPAEKYKEEFYLGLQRGKNNTTLLSAITLEAALQQRCRENIHRFIHNIIYDIPGNATQAIEKIKHIGSSSGCDMLYGMADGCALSQTYGGNYVS.

The protein belongs to the AllH family.

This is an uncharacterized protein from Escherichia coli (strain K12).